We begin with the raw amino-acid sequence, 103 residues long: Large ribosomal subunit protein bL21 (103 aa).

The protein belongs to the bacterial ribosomal protein bL21 family. In terms of assembly, part of the 50S ribosomal subunit. Contacts protein L20.

This protein binds to 23S rRNA in the presence of protein L20. The protein is Large ribosomal subunit protein bL21 of Polynucleobacter necessarius subsp. necessarius (strain STIR1).